The primary structure comprises 356 residues: 3-isopropylmalate dehydrogenase (356 aa).

Substrate is bound by residues Arg91, Arg101, Arg129, and Asp223. Residues Asp223, Asp247, and Asp251 each contribute to the Mg(2+) site. 281–293 lines the NAD(+) pocket; that stretch reads GSAPDIAGKGIAN.

The protein belongs to the isocitrate and isopropylmalate dehydrogenases family. LeuB type 1 subfamily. In terms of assembly, homodimer. Mg(2+) is required as a cofactor. It depends on Mn(2+) as a cofactor.

Its subcellular location is the cytoplasm. It catalyses the reaction (2R,3S)-3-isopropylmalate + NAD(+) = 4-methyl-2-oxopentanoate + CO2 + NADH. Its pathway is amino-acid biosynthesis; L-leucine biosynthesis; L-leucine from 3-methyl-2-oxobutanoate: step 3/4. Catalyzes the oxidation of 3-carboxy-2-hydroxy-4-methylpentanoate (3-isopropylmalate) to 3-carboxy-4-methyl-2-oxopentanoate. The product decarboxylates to 4-methyl-2 oxopentanoate. This chain is 3-isopropylmalate dehydrogenase, found in Ralstonia nicotianae (strain ATCC BAA-1114 / GMI1000) (Ralstonia solanacearum).